Here is a 124-residue protein sequence, read N- to C-terminus: Small ribosomal subunit protein uS13c (124 aa).

Residues 100–124 (GQRTRTNARTRKGKVKTAVAKKKGR) form a disordered region. Basic residues predominate over residues 101–124 (QRTRTNARTRKGKVKTAVAKKKGR).

The protein belongs to the universal ribosomal protein uS13 family. As to quaternary structure, part of the 30S ribosomal subunit.

The protein resides in the plastid. It localises to the chloroplast. Functionally, located at the top of the head of the 30S subunit, it contacts several helices of the 16S rRNA. This is Small ribosomal subunit protein uS13c from Emiliania huxleyi (Coccolithophore).